Here is a 375-residue protein sequence, read N- to C-terminus: Trichodiene synthase (375 aa).

It belongs to the trichodiene synthase family.

It catalyses the reaction (2E,6E)-farnesyl diphosphate = trichodiene + diphosphate. Its pathway is sesquiterpene biosynthesis; trichothecene biosynthesis. In terms of biological role, TS is a member of the terpene cyclase group of enzymes. It catalyzes the isomerization and cyclization of farnesyl pyro-phosphate to form trichodiene, the first cyclic intermediate in the biosynthetic pathway for trichothecenes. It serves to branch trichothecene biosynthesis from the isoprenoid pathway. The protein is Trichodiene synthase (TRI5) of Fusarium cerealis (Fusarium crookwellense).